Reading from the N-terminus, the 144-residue chain is UPF0306 protein ESA_03544 (144 aa).

The protein belongs to the UPF0306 family.

This Cronobacter sakazakii (strain ATCC BAA-894) (Enterobacter sakazakii) protein is UPF0306 protein ESA_03544.